The chain runs to 447 residues: Na(+)/H(+) antiporter NhaA 2 (447 aa).

10 consecutive transmembrane segments (helical) span residues valine 34–tryptophan 54, leucine 77–leucine 97, alanine 115–valine 135, glycine 146–glycine 166, phenylalanine 176–tyrosine 196, isoleucine 200–glutamine 220, valine 290–glycine 310, proline 321–threonine 341, tryptophan 359–isoleucine 379, and phenylalanine 393–leucine 413.

Belongs to the NhaA Na(+)/H(+) (TC 2.A.33) antiporter family.

It is found in the cell membrane. The enzyme catalyses Na(+)(in) + 2 H(+)(out) = Na(+)(out) + 2 H(+)(in). Its function is as follows. Na(+)/H(+) antiporter that extrudes sodium in exchange for external protons. The protein is Na(+)/H(+) antiporter NhaA 2 of Mycolicibacterium gilvum (strain PYR-GCK) (Mycobacterium gilvum (strain PYR-GCK)).